Consider the following 150-residue polypeptide: MKIYADADALPTPIKDILCRAAMRRGIALVLVANKALRFPESPHITAVRVGQGFDVVDGVIVERVAPGDLVITADIPLAAQVVEKDAHALNPRGERYTRDNILGKLAMRGLLSELRDSGVVTGGPPPLSNRDREAFANQLDQFLRQYTGN.

This sequence belongs to the UPF0178 family.

The sequence is that of UPF0178 protein DMR_20710 from Solidesulfovibrio magneticus (strain ATCC 700980 / DSM 13731 / RS-1) (Desulfovibrio magneticus).